Reading from the N-terminus, the 768-residue chain is Photosystem I P700 chlorophyll a apoprotein A1 (768 aa).

The next 8 helical transmembrane spans lie at 76 to 99 (VFSAHFGHLAVIFIWMSAAFFHGA), 162 to 185 (LMALAIGALLMAAIMLHGGIYHYH), 201 to 225 (LNHHIAGLVGLGSIAWAGHCIHIGA), 310 to 328 (ISHHHLAFGVLAVLGGHLY), 369 to 392 (WHAQLGLNLAMIGSLSIIISHHMY), 408 to 434 (LGLFTHHMWIGGLFIVGAAAHAGIAMI), 456 to 478 (ALISHLNWACMFLGFHSFGLYIH), and 559 to 577 (FMIHHIHAFTIHVTLLILL). The [4Fe-4S] cluster site is built by Cys601 and Cys610. Transmembrane regions (helical) follow at residues 617-638 (HVFLGLFWMYNGLSVVIFHFSW) and 682-704 (ISMYGLMFLGAHFVWAFSLMFLF). Residue His693 coordinates divinylchlorophyll a'. Residues Met701 and Tyr709 each contribute to the divinyl chlorophyll a site. Trp710 serves as a coordination point for phylloquinone. A helical membrane pass occupies residues 742-762 (AVGAAHFLLGGIATTWAFFHA).

This sequence belongs to the PsaA/PsaB family. The PsaA/B heterodimer binds the P700 divinyl chlorophyll special pair and subsequent electron acceptors. PSI consists of a core antenna complex that captures photons, and an electron transfer chain that converts photonic excitation into a charge separation. The cyanobacterial PSI reaction center is composed of one copy each of PsaA,B,C,D,E,F,I,J,K,L,M and X, and forms trimeric complexes. Requires PSI electron transfer chain: 5 divinyl chlorophyll a, 1 divinyl chlorophyll a', 2 phylloquinones and 3 4Fe-4S clusters. PSI core antenna: 90 divinyl chlorophyll a, 22 carotenoids, 3 phospholipids and 1 galactolipid. P700 is a divinyl chlorophyll a/divinyl chlorophyll a' dimer, A0 is one or more divinyl chlorophyll a, A1 is one or both phylloquinones and FX is a shared 4Fe-4S iron-sulfur center. as cofactor.

The protein resides in the cellular thylakoid membrane. The enzyme catalyses reduced [plastocyanin] + hnu + oxidized [2Fe-2S]-[ferredoxin] = oxidized [plastocyanin] + reduced [2Fe-2S]-[ferredoxin]. In terms of biological role, psaA and PsaB bind P700, the primary electron donor of photosystem I (PSI), as well as the electron acceptors A0, A1 and FX. PSI is a plastocyanin/cytochrome c6-ferredoxin oxidoreductase, converting photonic excitation into a charge separation, which transfers an electron from the donor P700 chlorophyll pair to the spectroscopically characterized acceptors A0, A1, FX, FA and FB in turn. Oxidized P700 is reduced on the lumenal side of the thylakoid membrane by plastocyanin or cytochrome c6. This is Photosystem I P700 chlorophyll a apoprotein A1 from Prochlorococcus marinus (strain NATL1A).